Here is a 334-residue protein sequence, read N- to C-terminus: Glutaredoxin-3 (334 aa).

Ala-2 is modified (N-acetylalanine). The 115-residue stretch at 2-116 (AGGAAEAAAA…LTKKVQRHAS (115 aa)) folds into the Thioredoxin domain. The disordered stretch occupies residues 110 to 131 (KVQRHASSGSFSPSGSEHPKED). Ser-116 and Ser-119 each carry phosphoserine. Over residues 116-125 (SSGSFSPSGS) the composition is skewed to low complexity. 2 consecutive Glutaredoxin domains span residues 145-235 (CMLF…PKLE) and 236-334 (ERLK…KGEN). 2 residues coordinate [2Fe-2S] cluster: Cys-158 and Cys-260.

Homodimer; the homodimer is independent of 2Fe-2S clusters. Heterotrimer; forms a heterotrimeric complex composed by two BOLA2 molecules and one GLRX3 molecule; linked by [2Fe-2S] clusters. Interacts (via N-terminus) with PRKCQ/PKC-theta. Interacts (via C-terminus) with CSRP3. Interacts with CSRP2.

The protein resides in the cytoplasm. It is found in the cytosol. It localises to the cell cortex. The protein localises to the myofibril. Its subcellular location is the sarcomere. The protein resides in the z line. In terms of biological role, together with BOLA2, acts as a cytosolic iron-sulfur (Fe-S) cluster assembly factor that facilitates [2Fe-2S] cluster insertion into a subset of cytosolic proteins. Acts as a critical negative regulator of cardiac hypertrophy and a positive inotropic regulator. Required for hemoglobin maturation. Does not possess any thyoredoxin activity since it lacks the conserved motif that is essential for catalytic activity. This chain is Glutaredoxin-3 (GLRX3), found in Bos taurus (Bovine).